The chain runs to 394 residues: NAD(P)H-quinone oxidoreductase subunit H (394 aa).

This sequence belongs to the complex I 49 kDa subunit family. NDH-1 can be composed of about 15 different subunits; different subcomplexes with different compositions have been identified which probably have different functions.

It localises to the cellular thylakoid membrane. The enzyme catalyses a plastoquinone + NADH + (n+1) H(+)(in) = a plastoquinol + NAD(+) + n H(+)(out). It catalyses the reaction a plastoquinone + NADPH + (n+1) H(+)(in) = a plastoquinol + NADP(+) + n H(+)(out). Its function is as follows. NDH-1 shuttles electrons from an unknown electron donor, via FMN and iron-sulfur (Fe-S) centers, to quinones in the respiratory and/or the photosynthetic chain. The immediate electron acceptor for the enzyme in this species is believed to be plastoquinone. Couples the redox reaction to proton translocation, and thus conserves the redox energy in a proton gradient. Cyanobacterial NDH-1 also plays a role in inorganic carbon-concentration. This is NAD(P)H-quinone oxidoreductase subunit H from Acaryochloris marina (strain MBIC 11017).